The following is a 656-amino-acid chain: Kinesin-related protein SMY1 (656 aa).

The 338-residue stretch at 27–364 (HIEVILRAIP…LEFGDSIRQI (338 aa)) folds into the Kinesin motor domain. ATP is bound at residue 114–121 (GPSFSGKS). Thr-583 is modified (phosphothreonine).

This sequence belongs to the TRAFAC class myosin-kinesin ATPase superfamily. Kinesin family.

It is found in the cytoplasm. Its subcellular location is the cytoskeleton. In terms of biological role, possible microtubule-based motor that can interact or substitute with myosin 2 (MYO2). In Saccharomyces cerevisiae (strain ATCC 204508 / S288c) (Baker's yeast), this protein is Kinesin-related protein SMY1 (SMY1).